Reading from the N-terminus, the 1106-residue chain is Protein translocase subunit SecA (1106 aa).

Residues glutamine 175, 193–197 (GEGKT), and aspartate 694 contribute to the ATP site. The interval 1021-1106 (QEAPADEQQP…KYKNCHGQNA (86 aa)) is disordered. A compositionally biased stretch (basic and acidic residues) spans 1042–1056 (QRQDMSKYREQKQDL). Residues 1057 to 1067 (SDPNQQAAASQ) show a composition bias toward polar residues. Over residues 1068–1085 (DTREQQKREPIRAEKTVG) the composition is skewed to basic and acidic residues. Residues cysteine 1090, cysteine 1092, cysteine 1101, and histidine 1102 each contribute to the Zn(2+) site.

Belongs to the SecA family. In terms of assembly, monomer and homodimer. Part of the essential Sec protein translocation apparatus which comprises SecA, SecYEG and auxiliary proteins SecDF. Other proteins may also be involved. Zn(2+) is required as a cofactor.

It localises to the cell inner membrane. Its subcellular location is the cytoplasm. It carries out the reaction ATP + H2O + cellular proteinSide 1 = ADP + phosphate + cellular proteinSide 2.. In terms of biological role, part of the Sec protein translocase complex. Interacts with the SecYEG preprotein conducting channel. Has a central role in coupling the hydrolysis of ATP to the transfer of proteins into and across the cell membrane, serving as an ATP-driven molecular motor driving the stepwise translocation of polypeptide chains across the membrane. In Bacteroides thetaiotaomicron (strain ATCC 29148 / DSM 2079 / JCM 5827 / CCUG 10774 / NCTC 10582 / VPI-5482 / E50), this protein is Protein translocase subunit SecA.